Here is a 102-residue protein sequence, read N- to C-terminus: Small ribosomal subunit protein uS14 (102 aa).

It belongs to the universal ribosomal protein uS14 family. As to quaternary structure, part of the 30S ribosomal subunit. Contacts proteins S3 and S10.

In terms of biological role, binds 16S rRNA, required for the assembly of 30S particles and may also be responsible for determining the conformation of the 16S rRNA at the A site. The sequence is that of Small ribosomal subunit protein uS14 from Ehrlichia ruminantium (strain Gardel).